The sequence spans 588 residues: MNKLDVNQWFPIATTEDLPKRHVFHATLLGQEMAIWRDDSGSVNAWENRCPHRGLRLTLGANTGNELRCQYHGWTYESGTGGCTFVPAHRDAPPPNAARVNTFPVREKHGFIWTTLGQPPGEPISILDDAQLVNAVKTNLHSVVIDADIDGVVSVLRQNLSAFIDVFGAASAEDLHLKSMLQDRGILVTRSGSIAIHFYMQRSTISKCVVHAQVLTPGRPGYELQKNYSYAMNVIRRAAEAVATDLISITDISDQTIEKLEVVRENMTKAPPTHYICEVVTRTQETGDINSYWLKPIGYPLPAFSPGMHISITTPEGSIRQYSLVNGPDERESFIIGVKKEIQSRGGSRSMHEDVKVGTQLKVTLPRNGFPLVQTRKHPILVAGGIGITPILCMAQALDQQGSSYEIHYFARAFEHVPFQDRLTALGDRLNVHLGLGPDETRAKLPDIMEIHNAQDVDVYTCGPQPMIETVSAVALAHGIAEESIRFEFFSKKNDVPVSDEEYEVELKKTGQIFTVSPGSTLLQACLDNDVRIEASCEQGVCGTCITPVVSGDLEHHDTYLSKKERESGKWIMPCVSRCKSKKIVLDL.

The Rieske domain occupies 9-114 (WFPIATTEDL…VREKHGFIWT (106 aa)). [2Fe-2S] cluster is bound by residues Cys-50, His-52, Cys-69, and His-72. Residues 272–373 (PTHYICEVVT…TLPRNGFPLV (102 aa)) enclose the FAD-binding FR-type domain. The 2Fe-2S ferredoxin-type domain maps to 503–588 (YEVELKKTGQ…CKSKKIVLDL (86 aa)). [2Fe-2S] cluster is bound by residues Cys-537, Cys-542, Cys-545, and Cys-575.

Requires [2Fe-2S] cluster as cofactor.

Involved in the caffeine degradation, which is the essential first step for assimilating the carbon and nitrogen in caffeine. Catalyzes the oxidation of NADH and transfers electrons to NdmA and NdmB, which catalyze the N-demethylation reactions. This Pseudomonas putida (Arthrobacter siderocapsulatus) protein is Oxidoreductase NdmD (ndmD).